A 274-amino-acid chain; its full sequence is Rhamnulose-1-phosphate aldolase (274 aa).

The active site involves Glu117. The Zn(2+) site is built by His141, His143, and His212.

Belongs to the aldolase class II family. RhaD subfamily. As to quaternary structure, homotetramer. It depends on Zn(2+) as a cofactor.

Its subcellular location is the cytoplasm. It catalyses the reaction L-rhamnulose 1-phosphate = (S)-lactaldehyde + dihydroxyacetone phosphate. Its pathway is carbohydrate degradation; L-rhamnose degradation; glycerone phosphate from L-rhamnose: step 3/3. Its function is as follows. Catalyzes the reversible cleavage of L-rhamnulose-1-phosphate to dihydroxyacetone phosphate (DHAP) and L-lactaldehyde. This chain is Rhamnulose-1-phosphate aldolase, found in Escherichia coli O17:K52:H18 (strain UMN026 / ExPEC).